A 103-amino-acid chain; its full sequence is Large ribosomal subunit protein uL24 (103 aa).

Belongs to the universal ribosomal protein uL24 family. Part of the 50S ribosomal subunit.

In terms of biological role, one of two assembly initiator proteins, it binds directly to the 5'-end of the 23S rRNA, where it nucleates assembly of the 50S subunit. Its function is as follows. One of the proteins that surrounds the polypeptide exit tunnel on the outside of the subunit. The polypeptide is Large ribosomal subunit protein uL24 (Bacillus licheniformis (strain ATCC 14580 / DSM 13 / JCM 2505 / CCUG 7422 / NBRC 12200 / NCIMB 9375 / NCTC 10341 / NRRL NRS-1264 / Gibson 46)).